The chain runs to 355 residues: 3-dehydroquinate synthase (355 aa).

NAD(+) contacts are provided by residues Gly105–Asp109, Thr129–Ser130, Lys142, Lys151, and Thr169–Thr172. The Zn(2+) site is built by Glu184, His246, and His263.

It belongs to the sugar phosphate cyclases superfamily. Dehydroquinate synthase family. Requires Co(2+) as cofactor. It depends on Zn(2+) as a cofactor. NAD(+) is required as a cofactor.

The protein localises to the cytoplasm. The catalysed reaction is 7-phospho-2-dehydro-3-deoxy-D-arabino-heptonate = 3-dehydroquinate + phosphate. Its pathway is metabolic intermediate biosynthesis; chorismate biosynthesis; chorismate from D-erythrose 4-phosphate and phosphoenolpyruvate: step 2/7. Functionally, catalyzes the conversion of 3-deoxy-D-arabino-heptulosonate 7-phosphate (DAHP) to dehydroquinate (DHQ). In Streptococcus agalactiae serotype Ia (strain ATCC 27591 / A909 / CDC SS700), this protein is 3-dehydroquinate synthase.